The chain runs to 294 residues: tRNA pseudouridine synthase B (294 aa).

The Nucleophile role is filled by D39.

Belongs to the pseudouridine synthase TruB family. Type 1 subfamily.

The catalysed reaction is uridine(55) in tRNA = pseudouridine(55) in tRNA. In terms of biological role, responsible for synthesis of pseudouridine from uracil-55 in the psi GC loop of transfer RNAs. This is tRNA pseudouridine synthase B from Streptococcus agalactiae serotype Ia (strain ATCC 27591 / A909 / CDC SS700).